An 866-amino-acid polypeptide reads, in one-letter code: Fibrinogen alpha chain (866 aa).

The N-terminal stretch at 1-19 is a signal peptide; it reads MFSMRIVCLVLSVVGTAWT. Phosphoserine is present on serine 22. The segment at 36-38 is alpha-chain polymerization, binding distal domain of another fibrin gamma chain; that stretch reads GPR. Serine 45 is modified (phosphoserine; by FAM20C). Position 50 is a phosphoserine (serine 50). Serine 56 bears the Phosphoserine; by FAM20C mark. A coiled-coil region spans residues 68–631; that stretch reads CRMKGLIDEV…GHAKSRPVRD (564 aa). Residues 262-460 are disordered; that stretch reads ERPGGNEITR…SGSTTTTRRS (199 aa). A compositionally biased stretch (low complexity) spans 270 to 299; sequence TRGGSTSYGTGSETESPRNPSSAGSWNSGS. Phosphoserine is present on residues serine 281, serine 291, and serine 294. An O-linked (GalNAc...) threonine glycan is attached at threonine 320. Residue lysine 322 forms an Isoglutamyl lysine isopeptide (Lys-Gln) (interchain with Q-41 in alpha-2-antiplasmin) linkage. Residue glutamine 347 forms an Isoglutamyl lysine isopeptide (Gln-Lys) (interchain with K-?) linkage. Residue serine 351 is glycosylated (O-linked (GalNAc...) serine). Over residues 354-391 the composition is skewed to polar residues; sequence PGSTGTWNPGSSERGSAGHWTSESSVSGSTGQWHSESG. Phosphoserine; by FAM20C is present on serine 364. Glutamine 385 participates in a covalent cross-link: Isoglutamyl lysine isopeptide (Gln-Lys) (interchain with K-?). Threonine 412 bears the Phosphothreonine mark. Residues 424–449 are compositionally biased toward basic and acidic residues; it reads TRREYHTEKLVTSKGDKELRTGKEKV. The span at 450 to 460 shows a compositional bias: low complexity; it reads TSGSTTTTRRS. Serine 451 is modified (phosphoserine). An N-linked (GlcNAc...) asparagine; in variant Caracas-2 glycan is attached at serine 453. Cysteines 461 and 491 form a disulfide. Serine 501 carries the post-translational modification Phosphoserine. Threonine 505 bears the Phosphothreonine mark. Position 524 is a phosphoserine; by FAM20C (serine 524). Residues lysine 527 and lysine 558 each participate in an isoglutamyl lysine isopeptide (Lys-Gln) (interchain with Q-?) cross-link. Residues 543 to 638 form a disordered region; sequence ETESRGSESG…VRDCDDVLQT (96 aa). Serine 560 carries the post-translational modification Phosphoserine; by FAM20C. Proline 565 carries the 4-hydroxyproline; by P4HA1 modification. Isoglutamyl lysine isopeptide (Lys-Gln) (interchain with Q-?) cross-links involve residues lysine 575, lysine 581, and lysine 599. Low complexity predominate over residues 575–589; that stretch reads KSSSYSKQFTSSTSY. A compositionally biased stretch (basic and acidic residues) spans 594 to 617; it reads STFESKSYKMADEAGSEADHEGTH. Serine 609 is subject to Phosphoserine; by FAM20C. Residues 618–627 show a composition bias toward basic residues; the sequence is STKRGHAKSR. Residues 623-864 enclose the Fibrinogen C-terminal domain; sequence HAKSRPVRDC…AVRMKIRPLV (242 aa). N-linked (GlcNAc...) asparagine glycosylation occurs at asparagine 686. Ca(2+) contacts are provided by aspartate 791, aspartate 793, tryptophan 795, and glutamate 797. Cysteine 799 and cysteine 812 are oxidised to a cystine.

As to quaternary structure, heterohexamer; disulfide linked. Contains 2 sets of 3 non-identical chains (alpha, beta and gamma). The 2 heterotrimers are in head to head conformation with the N-termini in a small central domain. In terms of assembly, (Microbial infection) Interacts with Staphylococcus aureus protein Fib; this interaction inhibits fibrinogen-dependent platelet aggregation and protects the bacteria form phagocytosis. The alpha chain is normally not N-glycosylated, even though glycosylation at Asn-686 was observed when a fragment of the protein was expressed in insect cells. It is well known that heterologous expression of isolated domains can lead to adventitious protein modifications. Besides, glycosylation at Asn-686 is supported by large-scale glycoproteomics studies, but the evidence is still quite tenuous. Most likely, Asn-686 is not glycosylated in the healthy human body, or only with low efficiency. Post-translationally, O-glycosylated. In terms of processing, forms F13A-mediated cross-links between a glutamine and the epsilon-amino group of a lysine residue, forming fibronectin-fibrinogen heteropolymers. About one-third of the alpha chains in the molecules in blood were found to be phosphorylated. Post-translationally, conversion of fibrinogen to fibrin is triggered by thrombin, which cleaves fibrinopeptides A and B from alpha and beta chains, and thus exposes the N-terminal polymerization sites responsible for the formation of the soft clot. The soft clot is converted into the hard clot by factor XIIIA which catalyzes the epsilon-(gamma-glutamyl)lysine cross-linking between gamma chains (stronger) and between alpha chains (weaker) of different monomers. In terms of processing, phosphorylated by FAM20C in the extracellular medium. Detected in blood plasma (at protein level).

It localises to the secreted. Functionally, cleaved by the protease thrombin to yield monomers which, together with fibrinogen beta (FGB) and fibrinogen gamma (FGG), polymerize to form an insoluble fibrin matrix. Fibrin has a major function in hemostasis as one of the primary components of blood clots. In addition, functions during the early stages of wound repair to stabilize the lesion and guide cell migration during re-epithelialization. Was originally thought to be essential for platelet aggregation, based on in vitro studies using anticoagulated blood. However, subsequent studies have shown that it is not absolutely required for thrombus formation in vivo. Enhances expression of SELP in activated platelets via an ITGB3-dependent pathway. Maternal fibrinogen is essential for successful pregnancy. Fibrin deposition is also associated with infection, where it protects against IFNG-mediated hemorrhage. May also facilitate the immune response via both innate and T-cell mediated pathways. The polypeptide is Fibrinogen alpha chain (FGA) (Homo sapiens (Human)).